The primary structure comprises 2939 residues: Serine/threonine-protein kinase tel1 (2939 aa).

Disordered stretches follow at residues 193–212, 695–718, and 859–886; these read GTSV…RAGS, PPED…AADS, and KTRR…ETRK. The span at 697–715 shows a compositional bias: basic and acidic residues; that stretch reads EDSHKATSTDQPKREEIRA. An FAT domain is found at 1869–2471; it reads IAAAAATRCG…MYQIWSGVKA (603 aa). Residues 2577-2890 enclose the PI3K/PI4K catalytic domain; sequence FEPQMSIASG…DKKSTKNLNE (314 aa). Positions 2583–2589 are G-loop; the sequence is IASGVSA. The segment at 2755 to 2763 is catalytic loop; it reads GLGDRHGHN. Residues 2775–2799 are activation loop; it reads HIDLGVAFELGRILPVPELVPFRLT. Positions 2869-2894 are disordered; it reads DVVEAEDERRAGDKKSTKNLNEPSEA. Residues 2875–2884 show a composition bias toward basic and acidic residues; it reads DERRAGDKKS. Positions 2907–2939 constitute an FATC domain; that stretch reads KTLSVMATVNDLINQATDERNLAVLFCGWAAYA.

The protein belongs to the PI3/PI4-kinase family. ATM subfamily. As to quaternary structure, associates with DNA double-strand breaks.

It localises to the nucleus. It is found in the chromosome. Its subcellular location is the telomere. It catalyses the reaction L-seryl-[protein] + ATP = O-phospho-L-seryl-[protein] + ADP + H(+). The enzyme catalyses L-threonyl-[protein] + ATP = O-phospho-L-threonyl-[protein] + ADP + H(+). Serine/threonine protein kinase which activates checkpoint signaling upon genotoxic stresses such as ionizing radiation (IR), ultraviolet light (UV), or DNA replication stalling, thereby acting as a DNA damage sensor. Recognizes the substrate consensus sequence [ST]-Q. Phosphorylates histone H2A to form H2AS128ph (gamma-H2A) at sites of DNA damage, involved in the regulation of DNA damage response mechanism. Required for the control of telomere length and genome stability. The sequence is that of Serine/threonine-protein kinase tel1 (mus-21) from Neurospora crassa (strain ATCC 24698 / 74-OR23-1A / CBS 708.71 / DSM 1257 / FGSC 987).